Reading from the N-terminus, the 428-residue chain is Serine--tRNA ligase (428 aa).

Residue 233–235 participates in L-serine binding; it reads TAE. Residue 264-266 coordinates ATP; it reads RRE. Glu287 is an L-serine binding site. An ATP-binding site is contributed by 351-354; that stretch reads EVSS. An L-serine-binding site is contributed by Ser387.

Belongs to the class-II aminoacyl-tRNA synthetase family. Type-1 seryl-tRNA synthetase subfamily. As to quaternary structure, homodimer. The tRNA molecule binds across the dimer.

It is found in the cytoplasm. It carries out the reaction tRNA(Ser) + L-serine + ATP = L-seryl-tRNA(Ser) + AMP + diphosphate + H(+). The enzyme catalyses tRNA(Sec) + L-serine + ATP = L-seryl-tRNA(Sec) + AMP + diphosphate + H(+). It participates in aminoacyl-tRNA biosynthesis; selenocysteinyl-tRNA(Sec) biosynthesis; L-seryl-tRNA(Sec) from L-serine and tRNA(Sec): step 1/1. Catalyzes the attachment of serine to tRNA(Ser). Is also able to aminoacylate tRNA(Sec) with serine, to form the misacylated tRNA L-seryl-tRNA(Sec), which will be further converted into selenocysteinyl-tRNA(Sec). The chain is Serine--tRNA ligase from Salinibacter ruber (strain DSM 13855 / M31).